A 300-amino-acid polypeptide reads, in one-letter code: MNQSYGRLVSRAAIAATAMASLLLLIKIFAWWYTGSVSILAALVDSLVDIGASLTNLLVVRYSLQPADDNHSFGHGKAESLAALAQSMFISGSALFLFLTGIQHLVSPTPMTDPGVGVIVTIVALICTIILVSFQRWVVRRTQSQAVRADMLHYQSDVMMNGAILLALGLSWYGWHRADALFALGIGIYILYSALRMGYEAVQSLLDRALPDEERQEIIDIVASWPGVSGAHDLRTRQSGPTRFIQIHLEMEDSLPLVQAHMVADQVEQAILRRFPGSDVIIHQDPCSVVPREGKRSMLS.

A run of 4 helical transmembrane segments spans residues 12–32, 39–59, 82–102, and 114–134; these read AAIA…FAWW, ILAA…NLLV, AALA…LTGI, and PGVG…LVSF. Zn(2+)-binding residues include Asp45 and Asp49. Positions 153 and 157 each coordinate Zn(2+). 2 helical membrane-spanning segments follow: residues 156-176 and 178-198; these read SDVM…YGWH and ADAL…LRMG.

It belongs to the cation diffusion facilitator (CDF) transporter (TC 2.A.4) family. FieF subfamily. As to quaternary structure, homodimer.

Its subcellular location is the cell inner membrane. The enzyme catalyses Zn(2+)(in) + H(+)(out) = Zn(2+)(out) + H(+)(in). The catalysed reaction is Cd(2+)(in) + H(+)(out) = Cd(2+)(out) + H(+)(in). It carries out the reaction Fe(2+)(in) + H(+)(out) = Fe(2+)(out) + H(+)(in). Functionally, divalent metal cation transporter which exports Zn(2+), Cd(2+) and possibly Fe(2+). May be involved in zinc and iron detoxification by efflux. The sequence is that of Cation-efflux pump FieF from Escherichia coli O127:H6 (strain E2348/69 / EPEC).